The sequence spans 100 residues: NADH-quinone oxidoreductase subunit K (100 aa).

3 consecutive transmembrane segments (helical) span residues 4–24 (LQHG…GLII), 29–49 (LFML…FVVV), and 60–80 (VMFI…LALL).

Belongs to the complex I subunit 4L family. As to quaternary structure, NDH-1 is composed of 13 different subunits. Subunits NuoA, H, J, K, L, M, N constitute the membrane sector of the complex.

It localises to the cell inner membrane. It catalyses the reaction a quinone + NADH + 5 H(+)(in) = a quinol + NAD(+) + 4 H(+)(out). Functionally, NDH-1 shuttles electrons from NADH, via FMN and iron-sulfur (Fe-S) centers, to quinones in the respiratory chain. The immediate electron acceptor for the enzyme in this species is believed to be ubiquinone. Couples the redox reaction to proton translocation (for every two electrons transferred, four hydrogen ions are translocated across the cytoplasmic membrane), and thus conserves the redox energy in a proton gradient. The protein is NADH-quinone oxidoreductase subunit K of Photorhabdus laumondii subsp. laumondii (strain DSM 15139 / CIP 105565 / TT01) (Photorhabdus luminescens subsp. laumondii).